A 486-amino-acid chain; its full sequence is Pentatricopeptide repeat-containing protein At3g06430, chloroplastic (486 aa).

A chloroplast-targeting transit peptide spans 1-36; it reads MASMSLSFSSSLCSSRIPEGKRRFRHRDVGIVRCVL. PPR repeat units lie at residues 123–157, 158–188, 194–228, 229–264, 265–299, 300–334, 335–369, 370–404, 405–439, and 440–470; these read KEGT…GLEP, TVEL…MKSF, DVFT…LITP, NTVT…ACKP, DVWT…GIEP, ETRT…EFPW, TTST…GMKA, DTKT…EIPE, NTAF…QCVC, and DSRT…RQKL.

It belongs to the PPR family. P subfamily.

The protein resides in the plastid. The protein localises to the chloroplast. This is Pentatricopeptide repeat-containing protein At3g06430, chloroplastic (EMB2750) from Arabidopsis thaliana (Mouse-ear cress).